We begin with the raw amino-acid sequence, 344 residues long: Methionine synthase (344 aa).

Zn(2+)-binding residues include H211, C213, E236, and C315.

This sequence belongs to the archaeal MetE family. The cofactor is Zn(2+).

The protein operates within amino-acid biosynthesis; L-methionine biosynthesis via de novo pathway. Catalyzes the transfer of a methyl group to L-homocysteine resulting in methionine formation. The physiological methyl donor is unknown. In Thermoplasma volcanium (strain ATCC 51530 / DSM 4299 / JCM 9571 / NBRC 15438 / GSS1), this protein is Methionine synthase.